Reading from the N-terminus, the 176-residue chain is Translation initiation factor IF-3 (176 aa).

It belongs to the IF-3 family. In terms of assembly, monomer.

The protein localises to the cytoplasm. Functionally, IF-3 binds to the 30S ribosomal subunit and shifts the equilibrium between 70S ribosomes and their 50S and 30S subunits in favor of the free subunits, thus enhancing the availability of 30S subunits on which protein synthesis initiation begins. The protein is Translation initiation factor IF-3 of Streptococcus thermophilus (strain ATCC BAA-491 / LMD-9).